The chain runs to 235 residues: Large ribosomal subunit protein uL1 (235 aa).

It belongs to the universal ribosomal protein uL1 family. Part of the 50S ribosomal subunit.

Its function is as follows. Binds directly to 23S rRNA. The L1 stalk is quite mobile in the ribosome, and is involved in E site tRNA release. Functionally, protein L1 is also a translational repressor protein, it controls the translation of the L11 operon by binding to its mRNA. This chain is Large ribosomal subunit protein uL1, found in Synechococcus sp. (strain CC9605).